We begin with the raw amino-acid sequence, 79 residues long: Beta-defensin 15 (79 aa).

An N-terminal signal peptide occupies residues 1-20; the sequence is MKTFLFLFAVFFFLDPAKNA. Intrachain disulfides connect Cys26–Cys53, Cys33–Cys47, and Cys37–Cys54.

It belongs to the beta-defensin family.

The protein localises to the secreted. Has antibacterial activity. The protein is Beta-defensin 15 (Defb15) of Rattus norvegicus (Rat).